Consider the following 287-residue polypeptide: Membrane protein insertase YidC 2 (287 aa).

The N-terminal stretch at 1-26 (MKKKKRFKQKLLIASLVIGLVAVLSG) is a signal peptide. Residue Cys27 is the site of N-palmitoyl cysteine attachment. Residue Cys27 is the site of S-diacylglycerol cysteine attachment. Transmembrane regions (helical) follow at residues 65–85 (YAVG…PLMI), 135–155 (MMGC…YQAI), 178–198 (YILP…SMMG), 207–224 (AMIV…GITL), and 228–250 (LALY…NNPF).

It belongs to the OXA1/ALB3/YidC family. Type 2 subfamily.

It localises to the cell membrane. Required for the insertion and/or proper folding and/or complex formation of integral membrane proteins into the membrane. Involved in integration of membrane proteins that insert both dependently and independently of the Sec translocase complex, as well as at least some lipoproteins. This is Membrane protein insertase YidC 2 from Listeria innocua serovar 6a (strain ATCC BAA-680 / CLIP 11262).